The following is a 189-amino-acid chain: Apolipophorin-3 (189 aa).

An N-terminal signal peptide occupies residues 1 to 18 (MAAKFVVVLAACVALSHS). Residues 19-23 (AMVRR) constitute a propeptide that is removed on maturation.

Belongs to the insect apolipophorin-3 family. As to quaternary structure, equilibrium between a soluble monomer and a bound lipoprotein form. Apolipophorin-3 associates with lipophorin during lipid loading until each particle contains 9 or 14 molecules of apolipophorin-3. In terms of tissue distribution, hemolymph.

It localises to the secreted. In terms of biological role, assists in the loading of diacylglycerol, generated from triacylglycerol stores in the fat body through the action of adipokinetic hormone, into lipophorin, the hemolymph lipoprotein. It increases the lipid carrying capacity of lipophorin by covering the expanding hydrophobic surface resulting from diacylglycerol uptake. It thus plays a critical role in the transport of lipids during flight in several species of insects. The polypeptide is Apolipophorin-3 (Manduca sexta (Tobacco hawkmoth)).